The following is a 207-amino-acid chain: Uridine kinase (207 aa).

14–21 contacts ATP; that stretch reads GGSGSGKT.

It belongs to the uridine kinase family.

It is found in the cytoplasm. The catalysed reaction is uridine + ATP = UMP + ADP + H(+). The enzyme catalyses cytidine + ATP = CMP + ADP + H(+). It functions in the pathway pyrimidine metabolism; CTP biosynthesis via salvage pathway; CTP from cytidine: step 1/3. Its pathway is pyrimidine metabolism; UMP biosynthesis via salvage pathway; UMP from uridine: step 1/1. The polypeptide is Uridine kinase (Deinococcus deserti (strain DSM 17065 / CIP 109153 / LMG 22923 / VCD115)).